A 136-amino-acid polypeptide reads, in one-letter code: Protein LITTLE ZIPPER 1 (136 aa).

Residues 97-122 (ENQNIIRENEKLKKKALLLHQENKTL) are a coiled coil.

As to quaternary structure, interacts with REV. In terms of tissue distribution, expressed in the adaxial epidermis of the cotyledons and in the vascular cylinder of wild-type torpedo stage embryos.

Functionally, competitive inhibitor of the HD-ZIPIII transcription factors in shoot apical meristem (SAM) development. Acts by forming non-functional heterodimers. Part of a negative feedback loop. Essential for proper functioning of stem cells in the SAM. This is Protein LITTLE ZIPPER 1 from Arabidopsis thaliana (Mouse-ear cress).